A 111-amino-acid chain; its full sequence is Putative pterin-4-alpha-carbinolamine dehydratase (111 aa).

Belongs to the pterin-4-alpha-carbinolamine dehydratase family.

It carries out the reaction (4aS,6R)-4a-hydroxy-L-erythro-5,6,7,8-tetrahydrobiopterin = (6R)-L-erythro-6,7-dihydrobiopterin + H2O. This is Putative pterin-4-alpha-carbinolamine dehydratase from Alkaliphilus metalliredigens (strain QYMF).